An 818-amino-acid polypeptide reads, in one-letter code: H(+)/Cl(-) exchange transporter 3 (818 aa).

The Cytoplasmic portion of the chain corresponds to 1–125; sequence MESEQLFHRG…WEMTKSLYDA (125 aa). 3 consecutive short sequence motifs (di-leucine internalization motif; mediates targeting to late endosome and lysosome membranes) follow at residues 28–29, 46–47, and 71–75; these read LL and LLDLL. Residues 126-163 traverse the membrane as a helical segment; sequence WSGWLVVTLTGLASGALAGLIDIAADWMTDLKEGICLS. Asn-177 carries N-linked (GlcNAc...) asparagine glycosylation. The helical transmembrane segment at 209 to 232 threads the bilayer; sequence MNYIMYIFWALSFAFLAVSLVKVF. The Selectivity filter part_1 signature appears at 238 to 242; the sequence is GSGIP. A chloride-binding site is contributed by Ser-239. An intramembrane region (helical) is located at residues 241–248; it reads IPEIKTIL. A run of 2 helical transmembrane segments spans residues 258–276 and 282–301; these read GKWTLMIKTITLVLAVASG and EGPLVHVACCCGNIFSYLFP. Positions 280-284 match the Selectivity filter part_2 motif; sequence GKEGP. 2 intramembrane regions (helical) span residues 313–325 and 329–337; these read VLSAASAAGVSVA and PIGGVLFSL. 3 consecutive transmembrane segments (helical) span residues 349–367, 391–416, and 423–443; these read LWRSFFAALVAAFVLRSIN, FPFILLGVFGGLWGAFFIRANIAWCR, and FGKYPVLEVIIVAAITAVIAF. Residues Asn-451 and Asn-479 are each glycosylated (N-linked (GlcNAc...) asparagine). A run of 2 helical transmembrane segments spans residues 500-520 and 525-544; these read IWQLCLALIFKIIMTVFTFGI and GLFIPSMAIGAIAGRIVGIA. The short motif at 525–529 is the Selectivity filter part_3 element; that stretch reads GLFIP. Position 527 (Phe-527) interacts with chloride. 2 consecutive intramembrane regions (helical) follow at residues 572–586 and 590–601; these read GLYAMVGAAACLGGV and TVSLVVIVFELT. Positions 602–605 form an intramembrane region, note=Loop between two helices; sequence GGLE. Residues 606 to 624 traverse the membrane as a helical segment; that stretch reads YIVPLMAAVMTSKWVGDAF. The Cytoplasmic portion of the chain corresponds to 625 to 818; it reads GREGIYEAHI…NQDPASIMFN (194 aa). Position 630 (Tyr-630) interacts with chloride. CBS domains lie at 658–722 and 755–812; these read MRPR…ARKK and LDMS…NQDP. Residues 689 to 691 and 796 to 799 contribute to the ATP site; these read YNG and TKKD.

The protein belongs to the chloride channel (TC 2.A.49) family. ClC-3/CLCN3 subfamily. In terms of assembly, monomer and homodimer. Forms heterodimers with CLCN4. Interacts with GOPC, PDZK1 and NHERF1/EBP50. In terms of processing, N-glycosylated. In terms of tissue distribution, expressed primarily in tissues derived from neuroectoderm. Within the brain, its expression is particularly evident in the hippocampus, olfactory cortex, and olfactory bulb. Highly expressed in aortic and coronary vascular smooth muscle cells, and aortic endothelial cells. Also expressed in tracheal and alveolar epithelial cells, and intima and media of the pulmonary vessels. Expressed in bronchus and colon (at protein level).

The protein localises to the early endosome membrane. The protein resides in the late endosome membrane. It is found in the lysosome membrane. Its subcellular location is the cell membrane. It localises to the golgi apparatus membrane. The protein localises to the cell projection. The protein resides in the ruffle membrane. Its function is as follows. Strongly outwardly rectifying, electrogenic H(+)/Cl(-)exchanger which mediates the exchange of chloride ions against protons. The CLC channel family contains both chloride channels and proton-coupled anion transporters that exchange chloride or another anion for protons. The presence of conserved gating glutamate residues is typical for family members that function as antiporters. Functionally, strongly outwardly rectifying, electrogenic H(+)/Cl(-)exchanger which mediates the exchange of chloride ions against protons. The protein is H(+)/Cl(-) exchange transporter 3 (CLCN3) of Homo sapiens (Human).